Here is a 332-residue protein sequence, read N- to C-terminus: MKKRKNKKNSKAAEKALKVTINGKEETVYEQETPETEANKSMTFSNWEEKRQAEQEVAASQEHPDEDEFNWDSEEDKVFKEDPKVVPPFQKKKTKLYAKGKTGAAKPVKRVAATIAFAAVIGTGLGLFALNISGNKEASAPASLEDSLGSQTAKAGDTSADKQTSGAEKQAAQTEGTYKTYAVQAGKFSNEKGAETLTEQLTEKGYSAVSLSKDDGYTYVIAGLASEKEVSQQLGQVLIDSDFEAWGGKELSLSIESDMTDSFKETAELAAKAILDEDITKASVEKIEKSLGETKASETGEKKAILQALKELEDPSAEAGWKAQQELLAVVK.

Residues 1 to 10 (MKKRKNKKNS) show a composition bias toward basic residues. Residues 1-71 (MKKRKNKKNS…EHPDEDEFNW (71 aa)) are disordered. Residues 11-27 (KAAEKALKVTINGKEET) are compositionally biased toward basic and acidic residues. A helical membrane pass occupies residues 112 to 132 (AATIAFAAVIGTGLGLFALNI). Residues 139–174 (SAPASLEDSLGSQTAKAGDTSADKQTSGAEKQAAQT) form a disordered region. The segment covering 161 to 174 (DKQTSGAEKQAAQT) has biased composition (polar residues). One can recognise an SPOR domain in the interval 175–250 (EGTYKTYAVQ…SDFEAWGGKE (76 aa)).

The protein resides in the cell membrane. Appears to be degraded early in engulfment, in correlation with its loss from polar septa. Facilitates the rapid and spatially regulated dissolution of septal peptidoglycan. This is Stage II sporulation protein B from Bacillus subtilis (strain 168).